A 450-amino-acid chain; its full sequence is Caspase Dronc (450 aa).

The propeptide occupies 1 to 134; sequence MQPPELEIGM…RTSRKSADIV (134 aa). The CARD domain occupies 64-109; it reads EKDVRVEQHRRLLLKITQRGPTAYNLLINALRNINCLDAAVLLESV. The required for binding Diap1 stretch occupies residues 114-125; that stretch reads SRPPFISLNERR. Catalysis depends on residues His271 and Cys318. A propeptide spanning residues 321 to 324 is cleaved from the precursor; it reads DEYD.

This sequence belongs to the peptidase C14A family. In terms of assembly, interacts (via residues 114-125) with Diap1 (via BIR 2 domain); binding blocks Dronc-mediated cell death. Can form a stable complex with Drice. Rpr, hid and grim can out-compete Dronc for binding Diap1, therefore removing Diap1-mediated ubiquitination. Interacts (via CARD domain) with Dark (via Dark CARD and WD domains); the interaction stimulates Dark oligomerization to form the apoptosome and brings pairs of Dronc molecules together on the apoptosome to facilitate their dimerization and activation by autocatalytic cleavage. Binding to Dark stimulates apoptosome assembly. After autocatalytic cleavage the Dronc caspase domain dissociates from the apoptosome but the CARD domain remains associated. Ubiquitinated by Diap1, leading to its subsequent degradation. In terms of tissue distribution, ubiquitously expressed in embryos during early stages of development. In late third instar larvae, dramatic up-regulation in salivary glands and midgut before histolysis of these tissues.

It localises to the cytoplasm. The enzyme catalyses Strict requirement for an Asp residue at position P1 and with a marked preference for His at position P2. It has a preferred cleavage sequence of Leu-Gly-His-Asp-|-Xaa.. With respect to regulation, zymogen activated by autocatalytic cleavage; association with the Dark apoptosome brings multiple molecules together to facilitate their dimerization and activation by autocatalytic cleavage. In terms of biological role, involved in the activation cascade of caspases responsible for apoptosis execution. Effector of steroid-mediated apoptosis during insect metamorphosis. Overexpression promotes programmed cell death. Interaction with Diap1 is required to suppress Dronc-mediated cell death; via Diap1-mediated ubiquitination of Dronc. Rate-limiting caspase in rpr, grim and hid death pathway. Recruited to the Dark apoptosome, an adapter protein complex that mediates activation of the caspase cascade in programmed cell death initiated by the intrinsic apoptosis pathway. Association with the Dark apoptosome stimulates autocatalytic cleavage and activation of Dronc, promoting Dronc-mediated cleavage of downstream effector caspases such as Drice. This Drosophila melanogaster (Fruit fly) protein is Caspase Dronc.